The following is a 623-amino-acid chain: Low affinity potassium transport system protein Kup (623 aa).

Transmembrane regions (helical) follow at residues 9 to 29 (LPAI…TSPL), 49 to 69 (VFGF…FKYL), 101 to 121 (VLVI…VITP), 137 to 157 (PSLD…LFMI), 163 to 183 (GMVG…LAVL), 212 to 232 (AVSF…EALY), 247 to 267 (WFSV…ALLL), 276 to 296 (PFFL…ATLA), 337 to 357 (IYIP…IVSF), 363 to 383 (LAAA…ILFA), 395 to 415 (ILVG…FSAN), and 419 to 439 (LFSG…IMTT).

This sequence belongs to the HAK/KUP transporter (TC 2.A.72) family.

It localises to the cell inner membrane. The enzyme catalyses K(+)(in) + H(+)(in) = K(+)(out) + H(+)(out). In terms of biological role, responsible for the low-affinity transport of potassium into the cell. Likely operates as a K(+):H(+) symporter. The chain is Low affinity potassium transport system protein Kup from Cronobacter sakazakii (strain ATCC BAA-894) (Enterobacter sakazakii).